We begin with the raw amino-acid sequence, 344 residues long: C5a anaphylatoxin chemotactic receptor 2 (344 aa).

The Extracellular portion of the chain corresponds to 1–44; that stretch reads MMNHTTSEYYDYEYDHEHYSDLPDVPVDCPAGTCFTSDVYLIVL. N-linked (GlcNAc...) asparagine glycosylation is present at Asn3. Residues 45-67 traverse the membrane as a helical segment; it reads LVLYAAVFLVGVPGNTLVAWVTW. At 68–78 the chain is on the cytoplasmic side; the sequence is KESRHRLGASW. The helical transmembrane segment at 79–101 threads the bilayer; the sequence is FLHLTMADLLCCVSLPFLAVPIA. At 102–120 the chain is on the extracellular side; sequence QKGHWPYGAAGCWLLSSIT. The cysteines at positions 113 and 192 are disulfide-linked. A helical membrane pass occupies residues 121–143; the sequence is ILSMYASVLLLTGLSGDLFLLAF. The Cytoplasmic portion of the chain corresponds to 144–155; it reads RPSWKGADHRTF. A helical transmembrane segment spans residues 156–178; sequence GVRVVQASSWMLGLLLTVPSAVY. Residues 179-208 lie on the Extracellular side of the membrane; that stretch reads RRLLQEHYPPRLVCGIDYGGSVSAEVAITT. The helical transmembrane segment at 209–231 threads the bilayer; that stretch reads VRFLFGFLGPLVFMAGCHGILQR. At 232-243 the chain is on the cytoplasmic side; sequence QMARRHWPLGTA. A helical membrane pass occupies residues 244-266; it reads VVVGFFICWTPYHVLRVIIAAAP. Residues 267-280 lie on the Extracellular side of the membrane; sequence PHSLLLARVLEAEP. Residues 281–300 traverse the membrane as a helical segment; the sequence is LFNGLALAHSALNPIMFLYF. At 301 to 344 the chain is on the cytoplasmic side; the sequence is GRKQLCKSLQAACHWALRDPQDEESAVTKVSISTSHEMVSEMPV. Residue Ser325 is modified to Phosphoserine.

It belongs to the G-protein coupled receptor 1 family. As to quaternary structure, interacts with C3 (the anaphylatoxin peptide C3a and the adipogenic hormone ASP); the interaction occurs with higher affinity for ASP, enhancing the phosphorylation and activation of GPR77, recruitment of ARRB2 to the cell surface and endocytosis of GRP77. In terms of tissue distribution, highly expressed in liver and spleen. Lower levels in intestine, brain and kidney. Also expressed in adipose tissues with highest levels in gonadal and ingual fat depots. Lower levels in brown tissue.

The protein resides in the cell membrane. In terms of biological role, receptor for the chemotactic and inflammatory C3a, C4a and C5a anaphylatoxin peptides and also for their dearginated forms ASP/C3adesArg, C4adesArg and C5adesArg respectively. Couples weakly to G(i)-mediated signaling pathways. This is C5a anaphylatoxin chemotactic receptor 2 (C5ar2) from Mus musculus (Mouse).